Here is a 587-residue protein sequence, read N- to C-terminus: Aspartate--tRNA ligase (587 aa).

Glu-174 is a binding site for L-aspartate. The interval 198–201 (QITK) is aspartate. Arg-220 serves as a coordination point for L-aspartate. Residues 220–222 (RDE) and Gln-229 contribute to the ATP site. Residue His-443 participates in L-aspartate binding. ATP is bound at residue Glu-477. Residue Arg-484 coordinates L-aspartate. ATP is bound at residue 529–532 (GLDR).

The protein belongs to the class-II aminoacyl-tRNA synthetase family. Type 1 subfamily. As to quaternary structure, homodimer.

It is found in the cytoplasm. It carries out the reaction tRNA(Asp) + L-aspartate + ATP = L-aspartyl-tRNA(Asp) + AMP + diphosphate. Catalyzes the attachment of L-aspartate to tRNA(Asp) in a two-step reaction: L-aspartate is first activated by ATP to form Asp-AMP and then transferred to the acceptor end of tRNA(Asp). This chain is Aspartate--tRNA ligase, found in Streptococcus pneumoniae (strain Taiwan19F-14).